A 632-amino-acid polypeptide reads, in one-letter code: Chaperone protein DnaK (632 aa).

The residue at position 199 (T199) is a Phosphothreonine; by autocatalysis. The span at 597-611 shows a compositional bias: low complexity; the sequence is AAQQAGQAEGQAAQE. Positions 597-632 are disordered; sequence AAQQAGQAEGQAAQEPSQSTGNAQAEATDAEYEEVK. Residues 612 to 621 are compositionally biased toward polar residues; the sequence is PSQSTGNAQA.

It belongs to the heat shock protein 70 family.

Its function is as follows. Acts as a chaperone. The sequence is that of Chaperone protein DnaK from Amoebophilus asiaticus (strain 5a2).